The chain runs to 98 residues: NADH-ubiquinone oxidoreductase chain 4L (98 aa).

Helical transmembrane passes span 1 to 21, 30 to 50, and 61 to 81; these read MSLVYMNTALAFSISMLGLLM, LLCLEGMMLSLFTLGAITILT, and IVLLVFAACEAAVGLSLLVMV.

It belongs to the complex I subunit 4L family. Core subunit of respiratory chain NADH dehydrogenase (Complex I) which is composed of 45 different subunits.

It localises to the mitochondrion inner membrane. The enzyme catalyses a ubiquinone + NADH + 5 H(+)(in) = a ubiquinol + NAD(+) + 4 H(+)(out). In terms of biological role, core subunit of the mitochondrial membrane respiratory chain NADH dehydrogenase (Complex I) which catalyzes electron transfer from NADH through the respiratory chain, using ubiquinone as an electron acceptor. Part of the enzyme membrane arm which is embedded in the lipid bilayer and involved in proton translocation. The chain is NADH-ubiquinone oxidoreductase chain 4L (MT-ND4L) from Crocidura russula (Greater white-toothed shrew).